The following is a 245-amino-acid chain: 1-(5-phosphoribosyl)-5-[(5-phosphoribosylamino)methylideneamino] imidazole-4-carboxamide isomerase (245 aa).

D7 serves as the catalytic Proton acceptor. D129 serves as the catalytic Proton donor.

The protein belongs to the HisA/HisF family.

It localises to the cytoplasm. The enzyme catalyses 1-(5-phospho-beta-D-ribosyl)-5-[(5-phospho-beta-D-ribosylamino)methylideneamino]imidazole-4-carboxamide = 5-[(5-phospho-1-deoxy-D-ribulos-1-ylimino)methylamino]-1-(5-phospho-beta-D-ribosyl)imidazole-4-carboxamide. It functions in the pathway amino-acid biosynthesis; L-histidine biosynthesis; L-histidine from 5-phospho-alpha-D-ribose 1-diphosphate: step 4/9. This Shewanella pealeana (strain ATCC 700345 / ANG-SQ1) protein is 1-(5-phosphoribosyl)-5-[(5-phosphoribosylamino)methylideneamino] imidazole-4-carboxamide isomerase.